Here is a 336-residue protein sequence, read N- to C-terminus: MTNSTKVEKPWTKWHERLHKSLKSKSNLLPYGSSLLISVSGGQDSMALLKLILDLQRIYEWKVHVWHGDHGWHNQSRQIAEELEEWCKCQKLSFFCNRTNKQKVSTEEDARNWRYKSLIQQAKTLSKESPSLPCERVLTGHTANDRTETFIMNLARGAHLKGLSSLREDRTLETKIQLIRPILRFSRQETIQICDEMDLPIWIDPSNSNIAYSRNKIRAEIIPVLESLHPQSTIRISNLAERLTSLQKDQHQLAHLALGALLTSTGLSRSKMTKLSKTVRAIILAQWLEDNKAPLLSSKQLEELSQKIGKNKGPGNMDISNHLKIRWNKNSIELIN.

40 to 45 (SGGQDS) is a binding site for ATP.

Belongs to the tRNA(Ile)-lysidine synthase family.

The protein resides in the cytoplasm. It carries out the reaction cytidine(34) in tRNA(Ile2) + L-lysine + ATP = lysidine(34) in tRNA(Ile2) + AMP + diphosphate + H(+). In terms of biological role, ligates lysine onto the cytidine present at position 34 of the AUA codon-specific tRNA(Ile) that contains the anticodon CAU, in an ATP-dependent manner. Cytidine is converted to lysidine, thus changing the amino acid specificity of the tRNA from methionine to isoleucine. This is tRNA(Ile)-lysidine synthase from Prochlorococcus marinus (strain SARG / CCMP1375 / SS120).